The sequence spans 392 residues: Probable tRNA sulfurtransferase (392 aa).

Residues 60–162 (QQVINDLQQV…HDCAIVYGHK (103 aa)) form the THUMP domain. ATP contacts are provided by residues 180–181 (LL), 205–206 (TF), R264, G286, and Q295.

The protein belongs to the ThiI family.

It localises to the cytoplasm. It catalyses the reaction [ThiI sulfur-carrier protein]-S-sulfanyl-L-cysteine + a uridine in tRNA + 2 reduced [2Fe-2S]-[ferredoxin] + ATP + H(+) = [ThiI sulfur-carrier protein]-L-cysteine + a 4-thiouridine in tRNA + 2 oxidized [2Fe-2S]-[ferredoxin] + AMP + diphosphate. It carries out the reaction [ThiS sulfur-carrier protein]-C-terminal Gly-Gly-AMP + S-sulfanyl-L-cysteinyl-[cysteine desulfurase] + AH2 = [ThiS sulfur-carrier protein]-C-terminal-Gly-aminoethanethioate + L-cysteinyl-[cysteine desulfurase] + A + AMP + 2 H(+). It functions in the pathway cofactor biosynthesis; thiamine diphosphate biosynthesis. Functionally, catalyzes the ATP-dependent transfer of a sulfur to tRNA to produce 4-thiouridine in position 8 of tRNAs, which functions as a near-UV photosensor. Also catalyzes the transfer of sulfur to the sulfur carrier protein ThiS, forming ThiS-thiocarboxylate. This is a step in the synthesis of thiazole, in the thiamine biosynthesis pathway. The sulfur is donated as persulfide by IscS. The protein is Probable tRNA sulfurtransferase of Ureaplasma urealyticum serovar 10 (strain ATCC 33699 / Western).